The following is a 154-amino-acid chain: Myoglobin (154 aa).

Residues Gly-2–Lys-148 form the Globin domain. His-65 is a nitrite binding site. His-65 contributes to the O2 binding site. Residue His-94 coordinates heme b.

This sequence belongs to the globin family. As to quaternary structure, monomeric.

The protein localises to the cytoplasm. Its subcellular location is the sarcoplasm. It catalyses the reaction Fe(III)-heme b-[protein] + nitric oxide + H2O = Fe(II)-heme b-[protein] + nitrite + 2 H(+). It carries out the reaction H2O2 + AH2 = A + 2 H2O. Functionally, monomeric heme protein which primary function is to store oxygen and facilitate its diffusion within muscle tissues. Reversibly binds oxygen through a pentacoordinated heme iron and enables its timely and efficient release as needed during periods of heightened demand. Depending on the oxidative conditions of tissues and cells, and in addition to its ability to bind oxygen, it also has a nitrite reductase activity whereby it regulates the production of bioactive nitric oxide. Under stress conditions, like hypoxia and anoxia, it also protects cells against reactive oxygen species thanks to its pseudoperoxidase activity. The polypeptide is Myoglobin (MB) (Aethia pygmaea (Whiskered auklet)).